The primary structure comprises 241 residues: RecQ-mediated genome instability protein 1 (241 aa).

The protein belongs to the RMI1 family. As to quaternary structure, forms a complex with SGS1 and TOP3.

The protein localises to the cytoplasm. Its subcellular location is the nucleus. Functionally, structure-specific DNA-binding protein with a preference for cruciform structures. Also binds single-stranded DNA (ssDNA). Functions together with SGS1 and TOP3 to maintain genome integrity. Essential for proper meiotic cell division. Required for normal S-phase progression and DNA damage response. Required for resistance to the DNA-damaging agent methyl methanesulfonate (MMS). The sequence is that of RecQ-mediated genome instability protein 1 from Saccharomyces cerevisiae (strain ATCC 204508 / S288c) (Baker's yeast).